Reading from the N-terminus, the 251-residue chain is Small ribosomal subunit protein uS2 (251 aa).

The protein belongs to the universal ribosomal protein uS2 family.

The chain is Small ribosomal subunit protein uS2 from Aromatoleum aromaticum (strain DSM 19018 / LMG 30748 / EbN1) (Azoarcus sp. (strain EbN1)).